Here is a 260-residue protein sequence, read N- to C-terminus: ARL14 effector protein (260 aa).

N-acetylmethionine is present on M1. A Glycyl lysine isopeptide (Lys-Gly) (interchain with G-Cter in SUMO2) cross-link involves residue K177. Residue S183 is modified to Phosphoserine.

In terms of assembly, interacts with ARL14 and MYO1E.

It localises to the cytoplasm. In terms of biological role, through its interaction with ARL14 and MYO1E, may connect MHC class II-containing cytoplasmic vesicles to the actin network and hence controls the movement of these vesicles along the actin cytoskeleton in dendritic cells. This Bos taurus (Bovine) protein is ARL14 effector protein (ARL14EP).